The sequence spans 576 residues: Proline--tRNA ligase (576 aa).

Belongs to the class-II aminoacyl-tRNA synthetase family. ProS type 1 subfamily. In terms of assembly, homodimer.

Its subcellular location is the cytoplasm. The enzyme catalyses tRNA(Pro) + L-proline + ATP = L-prolyl-tRNA(Pro) + AMP + diphosphate. Catalyzes the attachment of proline to tRNA(Pro) in a two-step reaction: proline is first activated by ATP to form Pro-AMP and then transferred to the acceptor end of tRNA(Pro). As ProRS can inadvertently accommodate and process non-cognate amino acids such as alanine and cysteine, to avoid such errors it has two additional distinct editing activities against alanine. One activity is designated as 'pretransfer' editing and involves the tRNA(Pro)-independent hydrolysis of activated Ala-AMP. The other activity is designated 'posttransfer' editing and involves deacylation of mischarged Ala-tRNA(Pro). The misacylated Cys-tRNA(Pro) is not edited by ProRS. The polypeptide is Proline--tRNA ligase (Pelobacter propionicus (strain DSM 2379 / NBRC 103807 / OttBd1)).